The primary structure comprises 311 residues: Aspartate carbamoyltransferase catalytic subunit (311 aa).

The carbamoyl phosphate site is built by Arg55 and Thr56. Lys85 is an L-aspartate binding site. Positions 106, 135, and 138 each coordinate carbamoyl phosphate. Arg168 and Arg230 together coordinate L-aspartate. Residues Leu268 and Pro269 each contribute to the carbamoyl phosphate site.

The protein belongs to the aspartate/ornithine carbamoyltransferase superfamily. ATCase family. As to quaternary structure, heterododecamer (2C3:3R2) of six catalytic PyrB chains organized as two trimers (C3), and six regulatory PyrI chains organized as three dimers (R2).

It catalyses the reaction carbamoyl phosphate + L-aspartate = N-carbamoyl-L-aspartate + phosphate + H(+). It participates in pyrimidine metabolism; UMP biosynthesis via de novo pathway; (S)-dihydroorotate from bicarbonate: step 2/3. Its function is as follows. Catalyzes the condensation of carbamoyl phosphate and aspartate to form carbamoyl aspartate and inorganic phosphate, the committed step in the de novo pyrimidine nucleotide biosynthesis pathway. The chain is Aspartate carbamoyltransferase catalytic subunit from Buchnera aphidicola subsp. Schizaphis graminum (strain Sg).